The chain runs to 321 residues: Flagellin C (321 aa).

It belongs to the bacterial flagellin family.

It localises to the secreted. The protein resides in the bacterial flagellum. Flagellin is the subunit protein which polymerizes to form the filaments of bacterial flagella. This Rhizobium meliloti (strain 1021) (Ensifer meliloti) protein is Flagellin C (flaC).